Consider the following 86-residue polypeptide: Large ribosomal subunit protein eL43 (86 aa).

Residues cysteine 38, cysteine 41, cysteine 57, and cysteine 60 each contribute to the Zn(2+) site. A C4-type zinc finger spans residues 38–60 (CPFCGSTGTVRRVSVGVWSCRKC).

It belongs to the eukaryotic ribosomal protein eL43 family. Putative zinc-binding subfamily. Part of the 50S ribosomal subunit. Requires Zn(2+) as cofactor.

Binds to the 23S rRNA. This Aeropyrum pernix (strain ATCC 700893 / DSM 11879 / JCM 9820 / NBRC 100138 / K1) protein is Large ribosomal subunit protein eL43.